A 287-amino-acid chain; its full sequence is Uricase (287 aa).

Catalysis depends on charge relay system residues lysine 11 and threonine 58. The urate site is built by threonine 58, aspartate 59, phenylalanine 160, arginine 177, valine 219, glutamine 220, and asparagine 246. Catalysis depends on histidine 248, which acts as the Charge relay system. The Microbody targeting signal motif lies at 285-287 (SRL).

The protein belongs to the uricase family.

The protein resides in the peroxisome. It carries out the reaction urate + O2 + H2O = 5-hydroxyisourate + H2O2. It functions in the pathway purine metabolism; urate degradation; (S)-allantoin from urate: step 1/3. Catalyzes the oxidation of uric acid to 5-hydroxyisourate, which is further processed to form (S)-allantoin. The sequence is that of Uricase (uox) from Dictyostelium discoideum (Social amoeba).